Consider the following 624-residue polypeptide: DNA-directed RNA polymerase subunit gamma (624 aa).

Residues Cys-70, Cys-72, Cys-85, and Cys-88 each coordinate Zn(2+). Positions 466, 468, and 470 each coordinate Mg(2+).

Belongs to the RNA polymerase beta' chain family. RpoC1 subfamily. As to quaternary structure, in cyanobacteria the RNAP catalytic core is composed of 2 alpha, 1 beta, 1 beta', 1 gamma and 1 omega subunit. When a sigma factor is associated with the core the holoenzyme is formed, which can initiate transcription. Requires Mg(2+) as cofactor. Zn(2+) serves as cofactor.

It carries out the reaction RNA(n) + a ribonucleoside 5'-triphosphate = RNA(n+1) + diphosphate. Functionally, DNA-dependent RNA polymerase catalyzes the transcription of DNA into RNA using the four ribonucleoside triphosphates as substrates. This chain is DNA-directed RNA polymerase subunit gamma, found in Synechococcus sp. (strain ATCC 27144 / PCC 6301 / SAUG 1402/1) (Anacystis nidulans).